Consider the following 704-residue polypeptide: Elongation factor G (704 aa).

In terms of domain architecture, tr-type G spans 8–291 (DRVRNIGIMA…AVIEYLASPV (284 aa)). Residues 17-24 (AHIDAGKT), 90-94 (DTPGH), and 144-147 (NKMD) each bind GTP.

The protein belongs to the TRAFAC class translation factor GTPase superfamily. Classic translation factor GTPase family. EF-G/EF-2 subfamily.

Its subcellular location is the cytoplasm. In terms of biological role, catalyzes the GTP-dependent ribosomal translocation step during translation elongation. During this step, the ribosome changes from the pre-translocational (PRE) to the post-translocational (POST) state as the newly formed A-site-bound peptidyl-tRNA and P-site-bound deacylated tRNA move to the P and E sites, respectively. Catalyzes the coordinated movement of the two tRNA molecules, the mRNA and conformational changes in the ribosome. This Chlorobium chlorochromatii (strain CaD3) protein is Elongation factor G.